The primary structure comprises 273 residues: Probable ribosomal RNA small subunit methyltransferase A (273 aa).

S-adenosyl-L-methionine is bound by residues asparagine 26, leucine 28, glycine 53, glutamate 74, aspartate 98, and asparagine 113.

The protein belongs to the class I-like SAM-binding methyltransferase superfamily. rRNA adenine N(6)-methyltransferase family. RsmA subfamily.

It localises to the cytoplasm. In terms of biological role, specifically dimethylates two adjacent adenosines in the loop of a conserved hairpin near the 3'-end of 16S rRNA in the 30S particle. May play a critical role in biogenesis of 30S subunits. The protein is Probable ribosomal RNA small subunit methyltransferase A of Methanothermobacter thermautotrophicus (strain ATCC 29096 / DSM 1053 / JCM 10044 / NBRC 100330 / Delta H) (Methanobacterium thermoautotrophicum).